The chain runs to 90 residues: DNA-binding protein HU-beta (90 aa).

Belongs to the bacterial histone-like protein family. In terms of assembly, heterodimer of an alpha and a beta chain.

In terms of biological role, histone-like DNA-binding protein which is capable of wrapping DNA to stabilize it, and thus to prevent its denaturation under extreme environmental conditions. This is DNA-binding protein HU-beta (hupB) from Escherichia coli O6:H1 (strain CFT073 / ATCC 700928 / UPEC).